A 279-amino-acid polypeptide reads, in one-letter code: Ribosomal RNA small subunit methyltransferase I (279 aa).

Belongs to the methyltransferase superfamily. RsmI family.

It is found in the cytoplasm. It carries out the reaction cytidine(1402) in 16S rRNA + S-adenosyl-L-methionine = 2'-O-methylcytidine(1402) in 16S rRNA + S-adenosyl-L-homocysteine + H(+). Functionally, catalyzes the 2'-O-methylation of the ribose of cytidine 1402 (C1402) in 16S rRNA. In Synechocystis sp. (strain ATCC 27184 / PCC 6803 / Kazusa), this protein is Ribosomal RNA small subunit methyltransferase I.